The chain runs to 176 residues: Immunity factor for TNT homolog (176 aa).

In terms of assembly, interacts with the tuberculosis necrotizing toxin (TNT) homolog, the C-terminal domain of the outer membrane channel protein CpnT.

Its function is as follows. Antitoxin for tuberculosis necrotizing toxin (TNT) homolog. Acts by binding directly to TNT, which inhibits NAD(+) glycohydrolase activity of TNT and protects M.bovis from self-poisoning. The protein is Immunity factor for TNT homolog of Mycobacterium bovis (strain BCG / Pasteur 1173P2).